Reading from the N-terminus, the 62-residue chain is uncharacterized protein (62 aa).

The tract at residues 17 to 62 (YNNYNNNNNNNNNNNNNNNNNNNNNNNNNNNNNNNNNNNNNNKNNN) is disordered.

This is an uncharacterized protein from Dictyostelium discoideum (Social amoeba).